We begin with the raw amino-acid sequence, 853 residues long: MRIAKLILNTLLTLCILGLVAGGMLYFHLKSELQQPMQIYTADGKLIGEVGEQRRIPVKLADVPQRLIDAFLATEDSRFYDHHGLDPIGIARALFVAVSNGGASQGASTITQQLARNFFLTSEKTIIRKAREAVLAVEIENTLNKQEILELYLNKIFLGYRSYGVAAAAQTYFGKSLNELTLSEMAIIAGLPKAPSTMNPLYSLKRSEERRNVVLSRMLDEKYISKEEYDAALKEPIVASYHGAKFEFRADYVTEMVRQEMVRRFGEENAYTSGYKVFTTVLSKDQAEAQKAVRNNLIDYDMRHGYRGGAPLWQKNEAAWDNDRIVGFLRKLPDSEPFIPAAVIGIVKGGADILLASGEKMTLSTNAMRWTGRSNPVKVGEQIWIHQRANGEWQLGQIPAANSALVSLNSDNGAIEAVVGGFSYEQSKFNRATQSLVQVGSSIKPFIYAAALEKGLTLSSVLQDSPISIQKPGQKMWQPKNSPDRYDGPMRLRVGLGQSKNIIAIRAIQTAGIDFTAEFLQRFGFKRDQYFASEALALGAASFTPLEMARAYAVFDNGGFLIEPYIIEKIQDNTGKDLFIANPKIACIECNDIPVIYGETKDKINGFANIPLGENALKPTDDSTNGEELDQQPETVPELPELQSNMTALKEDAIDLMAAAKNASSKIEYAPRVISGELAFLIRSALNTAIYGEQGLDWKGTSWRIAQSIKRSDIGGKTGTTNSSKVAWYAGFGANLVTTTYVGFDDNKRVLGRGEAGAKTAMPAWITYMKTALSDKPERKLSLPPKIVEKNIDTLTGLLSPNGGRKEYFIAGTEPTRTYLSEMQERGYYVPTELQQRLNNEGNTPATQPQELF.

Topologically, residues 1–6 are cytoplasmic; the sequence is MRIAKL. Residues 7–27 traverse the membrane as a helical; Signal-anchor for type II membrane protein segment; the sequence is ILNTLLTLCILGLVAGGMLYF. At 28–853 the chain is on the periplasmic side; it reads HLKSELQQPM…TPATQPQELF (826 aa). Positions 37 to 205 are transglycosylase; that stretch reads MQIYTADGKL…STMNPLYSLK (169 aa). Residue glutamate 75 is the Proton donor; for transglycosylase activity of the active site. Residues 387–681 form a transpeptidase region; it reads QRANGEWQLG…RVISGELAFL (295 aa). Serine 441 functions as the Acyl-ester intermediate; for transpeptidase activity in the catalytic mechanism. The interval 615-636 is disordered; that stretch reads NALKPTDDSTNGEELDQQPETV.

It in the N-terminal section; belongs to the glycosyltransferase 51 family. In the C-terminal section; belongs to the transpeptidase family.

It localises to the cell inner membrane. The enzyme catalyses [GlcNAc-(1-&gt;4)-Mur2Ac(oyl-L-Ala-gamma-D-Glu-L-Lys-D-Ala-D-Ala)](n)-di-trans,octa-cis-undecaprenyl diphosphate + beta-D-GlcNAc-(1-&gt;4)-Mur2Ac(oyl-L-Ala-gamma-D-Glu-L-Lys-D-Ala-D-Ala)-di-trans,octa-cis-undecaprenyl diphosphate = [GlcNAc-(1-&gt;4)-Mur2Ac(oyl-L-Ala-gamma-D-Glu-L-Lys-D-Ala-D-Ala)](n+1)-di-trans,octa-cis-undecaprenyl diphosphate + di-trans,octa-cis-undecaprenyl diphosphate + H(+). It carries out the reaction Preferential cleavage: (Ac)2-L-Lys-D-Ala-|-D-Ala. Also transpeptidation of peptidyl-alanyl moieties that are N-acyl substituents of D-alanine.. Its pathway is cell wall biogenesis; peptidoglycan biosynthesis. Cell wall formation. Synthesis of cross-linked peptidoglycan from the lipid intermediates. The enzyme has a penicillin-insensitive transglycosylase N-terminal domain (formation of linear glycan strands) and a penicillin-sensitive transpeptidase C-terminal domain (cross-linking of the peptide subunits). The chain is Penicillin-binding protein 1A (mrcA) from Haemophilus influenzae (strain ATCC 51907 / DSM 11121 / KW20 / Rd).